Here is a 188-residue protein sequence, read N- to C-terminus: Selenoprotein S B (188 aa).

A helical membrane pass occupies residues 29–49; that stretch reads EALSNYGWYILLGCIVIYFLI. A compositionally biased stretch (basic and acidic residues) spans 116–125; it reads TWDRMQEGKS. The tract at residues 116 to 188 is disordered; it reads TWDRMQEGKS…RGPSSGGSUG (73 aa). Over residues 136 to 147 the composition is skewed to low complexity; that stretch reads ASPRTSTSSSAP. Residue Sec187 is a non-standard amino acid, selenocysteine.

It belongs to the selenoprotein S family.

It is found in the endoplasmic reticulum membrane. It localises to the cytoplasm. Involved in the degradation process of misfolded endoplasmic reticulum (ER) luminal proteins. Participates in the transfer of misfolded proteins from the ER to the cytosol, where they are destroyed by the proteasome in a ubiquitin-dependent manner. The sequence is that of Selenoprotein S B (vimp-b) from Xenopus laevis (African clawed frog).